The chain runs to 102 residues: Large ribosomal subunit protein bL21 (102 aa).

It belongs to the bacterial ribosomal protein bL21 family. As to quaternary structure, part of the 50S ribosomal subunit. Contacts protein L20.

In terms of biological role, this protein binds to 23S rRNA in the presence of protein L20. The protein is Large ribosomal subunit protein bL21 of Nitratiruptor sp. (strain SB155-2).